The chain runs to 563 residues: MTVLEITLAVILTLLGLAILAILLTRWARCKQSEMYISRYSSEQSARLLDYEDGRGSRHAYSTQSDTSYDNRERSKRDYTPSTNSLVSMASKFSLGQTELILLLMCFILALSRSSIGSIKCLQTTEEPPSRTAGAMMQFTAPIPGATGPIKLSQKTIVQTPGPIVQYPGSNAGPPSAPRGPPMAPIIISQRTARIPQVHTMDSSGKITLTPVVILTGYMDEELAKKSCSKIQILKCGGTARSQNSREENKEALKNDIIFTNSVESLKSAHIKEPEREGKGTDLEKDKIGMEVKVDSDAGIPKRQETQLKISEMSIPQGQGAQIKKSVSDVPRGQESQVKKSESGVPKGQEAQVTKSGLVVLKGQEAQVEKSEMGVPRRQESQVKKSQSGVSKGQEAQVKKRESVVLKGQEAQVEKSELKVPKGQEGQVEKTEADVPKEQEVQEKKSEAGVLKGPESQVKNTEVSVPETLESQVKKSESGVLKGQEAQEKKESFEDKGNNDKEKERDAEKDPNKKEKGDKNTKGDKGKDKVKGKRESEINGEKSKGSKRAKANTGRKYNKKVEE.

Residues 3 to 23 (VLEITLAVILTLLGLAILAIL) traverse the membrane as a helical segment. The segment at 56–81 (GSRHAYSTQSDTSYDNRERSKRDYTP) is disordered. Over residues 69 to 79 (YDNRERSKRDY) the composition is skewed to basic and acidic residues. Residues 99 to 119 (ELILLLMCFILALSRSSIGSI) form a helical membrane-spanning segment. A disordered region spans residues 311–563 (SEMSIPQGQG…GRKYNKKVEE (253 aa)). Positions 367-383 (QVEKSEMGVPRRQESQV) are enriched in basic and acidic residues. The segment covering 384–395 (KKSQSGVSKGQE) has biased composition (low complexity). Composition is skewed to basic and acidic residues over residues 412–447 (QVEK…KKSE) and 485–544 (EAQE…EKSK).

It is found in the membrane. This chain is Testis-expressed basic protein 1, found in Homo sapiens (Human).